The following is a 302-amino-acid chain: 4-hydroxy-tetrahydrodipicolinate synthase (302 aa).

Thr-55 provides a ligand contact to pyruvate. The Proton donor/acceptor role is filled by Tyr-144. The active-site Schiff-base intermediate with substrate is Lys-172. Residue Val-214 coordinates pyruvate.

Belongs to the DapA family. Homotetramer; dimer of dimers.

It is found in the cytoplasm. The enzyme catalyses L-aspartate 4-semialdehyde + pyruvate = (2S,4S)-4-hydroxy-2,3,4,5-tetrahydrodipicolinate + H2O + H(+). The protein operates within amino-acid biosynthesis; L-lysine biosynthesis via DAP pathway; (S)-tetrahydrodipicolinate from L-aspartate: step 3/4. In terms of biological role, catalyzes the condensation of (S)-aspartate-beta-semialdehyde [(S)-ASA] and pyruvate to 4-hydroxy-tetrahydrodipicolinate (HTPA). In Prochlorococcus marinus (strain MIT 9313), this protein is 4-hydroxy-tetrahydrodipicolinate synthase.